Reading from the N-terminus, the 914-residue chain is Golgin candidate 6 (914 aa).

2 coiled-coil regions span residues I723–G837 and E863–I901. S911 carries the phosphoserine modification.

The protein resides in the golgi apparatus. It localises to the golgi stack. Golgi matrix protein playing a role in tethering of vesicles to Golgi membranes and in maintaining the overall structure of the Golgi apparatus. Functions in the anterograde transport of storage protein precursors from the endoplasmic reticulum (ER) to the Golgi complex. The polypeptide is Golgin candidate 6 (GC6) (Arabidopsis thaliana (Mouse-ear cress)).